Here is a 98-residue protein sequence, read N- to C-terminus: Alpha-elicitin MGM-alpha (98 aa).

Intrachain disulfides connect Cys-3-Cys-71, Cys-27-Cys-56, and Cys-51-Cys-95.

It belongs to the elicitin family.

It localises to the secreted. Induces local and distal defense responses (incompatible hypersensitive reaction) in plants from the solanaceae and cruciferae families. Elicits leaf necrosis and causes the accumulation of pathogenesis-related proteins. Might interact with the lipidic molecules of the plasma membrane. The protein is Alpha-elicitin MGM-alpha of Phytophthora megasperma (Potato pink rot fungus).